The sequence spans 366 residues: Peptide chain release factor 2 (366 aa).

Position 253 is an N5-methylglutamine (Gln253).

The protein belongs to the prokaryotic/mitochondrial release factor family. In terms of processing, methylated by PrmC. Methylation increases the termination efficiency of RF2.

It localises to the cytoplasm. Peptide chain release factor 2 directs the termination of translation in response to the peptide chain termination codons UGA and UAA. This chain is Peptide chain release factor 2 (prfB), found in Buchnera aphidicola subsp. Baizongia pistaciae (strain Bp).